We begin with the raw amino-acid sequence, 334 residues long: Cathepsin K (334 aa).

An N-terminal signal peptide occupies residues 1–19 (MLRLHWLALLVLLLPMAAA). Positions 20–119 (QLRPEPELDA…TLYVPDWSSR (100 aa)) are cleaved as a propeptide — activation peptide. N-linked (GlcNAc...) asparagine glycosylation is present at asparagine 108. 3 cysteine pairs are disulfide-bonded: cysteine 141-cysteine 182, cysteine 175-cysteine 215, and cysteine 274-cysteine 323. Cysteine 144 is an active-site residue. Catalysis depends on residues histidine 281 and asparagine 301.

Belongs to the peptidase C1 family.

It catalyses the reaction Broad proteolytic activity. With small-molecule substrates and inhibitors, the major determinant of specificity is P2, which is preferably Leu, Met &gt; Phe, and not Arg.. Its function is as follows. Closely involved in osteoclastic bone resorption and may participate partially in the disorder of bone remodeling. Displays potent endoprotease activity against fibrinogen at acid pH. May play an important role in extracellular matrix degradation. This chain is Cathepsin K (CTSK), found in Gallus gallus (Chicken).